The primary structure comprises 489 residues: 3-octaprenyl-4-hydroxybenzoate carboxy-lyase (489 aa).

Asn-172 is a binding site for Mn(2+). Prenylated FMN contacts are provided by residues 175–177, 189–191, and 194–195; these read IYR, RWL, and RG. Glu-238 contributes to the Mn(2+) binding site. Asp-287 serves as the catalytic Proton donor.

Belongs to the UbiD family. Homohexamer. The cofactor is prenylated FMN. It depends on Mn(2+) as a cofactor.

The protein localises to the cell membrane. The enzyme catalyses a 4-hydroxy-3-(all-trans-polyprenyl)benzoate + H(+) = a 2-(all-trans-polyprenyl)phenol + CO2. It functions in the pathway cofactor biosynthesis; ubiquinone biosynthesis. Its function is as follows. Catalyzes the decarboxylation of 3-octaprenyl-4-hydroxy benzoate to 2-octaprenylphenol, an intermediate step in ubiquinone biosynthesis. The protein is 3-octaprenyl-4-hydroxybenzoate carboxy-lyase of Tolumonas auensis (strain DSM 9187 / NBRC 110442 / TA 4).